Here is a 345-residue protein sequence, read N- to C-terminus: Phosphate acyltransferase (345 aa).

This sequence belongs to the PlsX family. In terms of assembly, homodimer. Probably interacts with PlsY.

Its subcellular location is the cytoplasm. The enzyme catalyses a fatty acyl-[ACP] + phosphate = an acyl phosphate + holo-[ACP]. It participates in lipid metabolism; phospholipid metabolism. Catalyzes the reversible formation of acyl-phosphate (acyl-PO(4)) from acyl-[acyl-carrier-protein] (acyl-ACP). This enzyme utilizes acyl-ACP as fatty acyl donor, but not acyl-CoA. The protein is Phosphate acyltransferase of Wolbachia sp. subsp. Drosophila simulans (strain wRi).